Here is a 468-residue protein sequence, read N- to C-terminus: 3-isopropylmalate dehydratase large subunit (468 aa).

Cys347, Cys407, and Cys410 together coordinate [4Fe-4S] cluster.

This sequence belongs to the aconitase/IPM isomerase family. LeuC type 1 subfamily. Heterodimer of LeuC and LeuD. [4Fe-4S] cluster serves as cofactor.

The enzyme catalyses (2R,3S)-3-isopropylmalate = (2S)-2-isopropylmalate. Its pathway is amino-acid biosynthesis; L-leucine biosynthesis; L-leucine from 3-methyl-2-oxobutanoate: step 2/4. Its function is as follows. Catalyzes the isomerization between 2-isopropylmalate and 3-isopropylmalate, via the formation of 2-isopropylmaleate. The sequence is that of 3-isopropylmalate dehydratase large subunit from Rippkaea orientalis (strain PCC 8801 / RF-1) (Cyanothece sp. (strain PCC 8801)).